A 370-amino-acid polypeptide reads, in one-letter code: Serine/threonine-protein kinase RIM11/MSD1 (370 aa).

Residues 39–322 form the Protein kinase domain; it reads FPTTEVVGHG…ALQCLCSPYF (284 aa). ATP is bound by residues 45-53 and Lys-68; that span reads VGHGSFGVV. Asp-164 acts as the Proton acceptor in catalysis. Residue Tyr-199 is modified to Phosphotyrosine.

It belongs to the protein kinase superfamily. CMGC Ser/Thr protein kinase family. GSK-3 subfamily. Interacts with TDA1.

It carries out the reaction L-seryl-[protein] + ATP = O-phospho-L-seryl-[protein] + ADP + H(+). It catalyses the reaction L-threonyl-[protein] + ATP = O-phospho-L-threonyl-[protein] + ADP + H(+). In terms of biological role, serine/threonine protein kinase that is thought to function in regulating kinetochore activity and entry into meiosis. Could phosphorylate IME1. The sequence is that of Serine/threonine-protein kinase RIM11/MSD1 (RIM11) from Saccharomyces cerevisiae (strain ATCC 204508 / S288c) (Baker's yeast).